A 559-amino-acid polypeptide reads, in one-letter code: MARRAAAGLLRRHLGPLAAGETLQARGMYPKQYGAANHAFSRFYSIQGQQRSLYGFRTNVETDDTQQSARMNFEVQKRSFSSAAAHVQRNPAYSVLNSDDVSYFKSILGDSGVVQDEDRVSVANMDWMGKYKGSSQLLLLPKSTAEVSKILSYCNSRRLAVVPQGGNTGLVGGSVPVYDEVIISLGGMDKIITFDNVNGILTCEAGCVLENLSSYVENKGFIMPLDLGAKGSCHIGGNISTNAGGLRFIRYGSLHGSVLGLEVVLADGTVLDMLTTLRKDNTGYDLKHLFIGSEGSLGIVTKIAILTPAKLPSTNVAFLSCNDYISCQKLLLAARRSLGEILSAFEFMDRHCINLAMKYLEGVHNPLPVSPFNFYVLIETTGSDESYDKAKLEAFLLRSMEDGLVADGVIAQDISQASNFWRIREGISEASVKVGAVYKYDLSIPVEKLYDIVEEMRSRVGDMGQVLGYGHLGDGNLHLNILSTKYSDKMLAQIEPFVYEWTSKQRGSISAEHGLGLMKAEKIHYSKSSEAVQLMASIKKLLDPNSILNPYKVLPQSVL.

Residues 1–80 constitute a mitochondrion transit peptide; the sequence is MARRAAAGLL…MNFEVQKRSF (80 aa). The region spanning 131–310 is the FAD-binding PCMH-type domain; the sequence is YKGSSQLLLL…TKIAILTPAK (180 aa).

The protein belongs to the FAD-binding oxidoreductase/transferase type 4 family. As to quaternary structure, homodimer. The cofactor is FAD.

The protein resides in the mitochondrion. The enzyme catalyses (R)-2-hydroxyglutarate + A = 2-oxoglutarate + AH2. Catalyzes the oxidation of D-2-hydroxyglutarate to alpha-ketoglutarate. In Oryza sativa subsp. japonica (Rice), this protein is Probable D-2-hydroxyglutarate dehydrogenase, mitochondrial (D2HGDH).